Consider the following 860-residue polypeptide: MTEYTPMIKQYLEIKDKYQDAFLFFRLGDFYEMFFEDALNASQILEITLTGREGGTKEKIPMCGVPYHSASGYIDTLIEKGYKVAICEQVEDPKTTKGMVKREVVQLISPGTVMDERGLKAKENNYIASLYCYEGKEYGFAYSDLSTGELKSTVIEASEDRLINELTTLSTRELIVSESEKTVLSDVMKEQLGLTFSVHEEDTIPSENEKLVTRHMSLSEKRAIGKLLHYLKETQKRDLGHLQQAVHYETSNYMKMDYYSKRNLELAESIRGKGRQGTLLWLLDNTQTAMGGRMLKQWIDRPLIDRKKIIERQNDVSELMANFFERLELVENLKNVYDLERLAGRVAYGNVNARDLIQLRNSLYQIPRIRATLLSMNSKSLTELANQLDPCEQLTEKLEEAIMDSAPISIREGGIIKDGYNSQLDTYRDASRNGKTWIAELERKERELTGIKTMKVGFNRVFGYYIEVTRANTHLLPEGRYERKQTLTNAERYITPELKEKEKLILDAEEKSMELEYLLFTEVREMVKDYIERLQKLAKSVSEIDCLQSFADISEKNHFIRPTLSEDGSLHVKQGRHPVVEKVMGAQSYVANDCDLDENREILLITGPNMSGKSTYMRQVALTAICAQVGCFVPAEEATLPIFDQIFTRIGAADDLIAGQSTFMVEMLEARNAIVHATKDSLILFDEIGRGTATYDGMALAQAIIEYIHENVHAKTLFSTHYHELTDLEKELRGLQNIHVSAVEENGKVVFLHKIKEGPADKSYGIHVAELAELPKSLIERASRILEQLENENKKIIITNEKQPEEIHEEVQLSMFPVEPEKKTSSKETKLIKEIASMNIMQMTPMDAMNKLYELQSKIH.

607–614 (GPNMSGKS) lines the ATP pocket.

The protein belongs to the DNA mismatch repair MutS family.

Its function is as follows. This protein is involved in the repair of mismatches in DNA. It is possible that it carries out the mismatch recognition step. This protein has a weak ATPase activity. The protein is DNA mismatch repair protein MutS of Listeria welshimeri serovar 6b (strain ATCC 35897 / DSM 20650 / CCUG 15529 / CIP 8149 / NCTC 11857 / SLCC 5334 / V8).